The chain runs to 353 residues: MPLVCLTDFREHAREHLSKSTWDFIEGGADDCCTRDENMAAFKKIRLRPRYLKDVSKVDMRTTIQGAEISAPICIAPTGFHRLAWPDGEMSTARAAQAASICYITSTYASCSLEDIVAAAPRGLRWFQLYVHPNRQINKQMIQKVESLGFKALVITVDVPKVGNRRNDITNQVDLMKKLLLKDLGSPEMGNVMPYFQMSPIDPSICWEDLSWFQSMTRLPIILKGILTKEDAELAVKHNVHGIIVSNHGGRQLDEVPASIDALTEVVAAVKGKVEVYLDGGIRTGNDVLKALALGAKCVFVGRPILWGLAYKGEHGVKEVLDILKNEFHTSMTLTGCRSVAEINQDLIQFSRL.

An FMN hydroxy acid dehydrogenase domain is found at P2–L353. FMN contacts are provided by residues P77 to G79, S106, and Q128. Y130 is an a 2-oxocarboxylate binding site. T156 serves as a coordination point for FMN. R165 contacts a 2-oxocarboxylate. Residue K224 coordinates FMN. H248 serves as the catalytic Proton acceptor. R251 contributes to the a 2-oxocarboxylate binding site. FMN-binding positions include D279 to R283 and G302 to R303. The Microbody targeting signal signature appears at S351–L353.

It belongs to the FMN-dependent alpha-hydroxy acid dehydrogenase family. In terms of assembly, homotetramer. The cofactor is FMN.

The protein localises to the peroxisome. It catalyses the reaction a (2S)-2-hydroxycarboxylate + O2 = a 2-oxocarboxylate + H2O2. It carries out the reaction 2-hydroxyhexadecanoate + O2 = 2-oxohexadecanoate + H2O2. The catalysed reaction is 2-hydroxyoctanoate + O2 = 2-oxooctanoate + H2O2. Its pathway is lipid metabolism; fatty acid metabolism. Functionally, oxidase that catalyzes the oxidation of medium and long chain hydroxyacids such as 2-hydroxyhexadecanoate and 2-hydroxyoctanoate, to the correspondong 2-oxoacids. Its role in the oxidation of 2-hydroxy fatty acids may contribute to the general pathway of fatty acid alpha-oxidation. Active in vitro with the artificial electron acceptor 2,6-dichlorophenolindophenol (DCIP), but O2 is believed to be the physiological electron acceptor, leading to the production of H2O2. The sequence is that of 2-Hydroxyacid oxidase 2 (HAO2) from Bos taurus (Bovine).